The following is a 361-amino-acid chain: Putative F-box protein At3g25460 (361 aa).

Positions 1–45 (MMMPELPEDLLVEILCRVPATSLKRLRSTCKLWNHLYNDKRFKSK) constitute an F-box domain.

This is Putative F-box protein At3g25460 from Arabidopsis thaliana (Mouse-ear cress).